Reading from the N-terminus, the 702-residue chain is Lipase maturation factor 2 (702 aa).

A run of 10 helical transmembrane segments spans residues 10 to 30 (LFLQ…YTQI), 75 to 95 (AQGL…ALLL), 102 to 122 (FIYL…QVFL), 123 to 143 (YFQW…VAPL), 164 to 184 (DLPF…SGVV), 226 to 246 (LSVV…FAPI), 259 to 279 (LLQI…LTLV), 316 to 336 (LMLE…YFGL), 363 to 383 (VTLP…LIAL), and 396 to 416 (FFAG…FLIS). Asn488 carries an N-linked (GlcNAc...) asparagine glycan. A helical transmembrane segment spans residues 628 to 648 (QLSPLEPSILLWGLLGAVVAI). The interval 660–702 (LQSSKQTREEKRKQAPKKDSRAVSEQTAPNSNSNGSWAPRRKK) is disordered. Basic and acidic residues predominate over residues 665–681 (QTREEKRKQAPKKDSRA). Positions 682–695 (VSEQTAPNSNSNGS) are enriched in polar residues.

The protein belongs to the lipase maturation factor family.

The protein resides in the endoplasmic reticulum membrane. Its function is as follows. Involved in the maturation of specific proteins in the endoplasmic reticulum. May be required for maturation and transport of active lipoprotein lipase (LPL) through the secretory pathway. This chain is Lipase maturation factor 2 (Lmf2), found in Rattus norvegicus (Rat).